The chain runs to 493 residues: UDP-N-acetylmuramate--L-alanine ligase (493 aa).

Position 126–132 (126–132 (GTHGKTT)) interacts with ATP.

Belongs to the MurCDEF family.

It is found in the cytoplasm. The enzyme catalyses UDP-N-acetyl-alpha-D-muramate + L-alanine + ATP = UDP-N-acetyl-alpha-D-muramoyl-L-alanine + ADP + phosphate + H(+). It participates in cell wall biogenesis; peptidoglycan biosynthesis. Its function is as follows. Cell wall formation. This Hamiltonella defensa subsp. Acyrthosiphon pisum (strain 5AT) protein is UDP-N-acetylmuramate--L-alanine ligase.